A 425-amino-acid polypeptide reads, in one-letter code: GPI mannosyltransferase 1 (425 aa).

Helical transmembrane passes span 11–31 (VIGA…WQDA), 85–105 (FFAF…WLIA), 144–164 (LLGV…VSLA), 166–186 (VILG…PAVV), 233–253 (IHLT…MYIL), 295–315 (FESL…PLVL), 340–360 (SQYF…SSLM), 367–387 (ILVG…GYNL), and 398–418 (GLFL…GIIV).

This sequence belongs to the PIGM family.

It is found in the endoplasmic reticulum membrane. It participates in glycolipid biosynthesis; glycosylphosphatidylinositol-anchor biosynthesis. Its function is as follows. Mannosyltransferase involved in glycosylphosphatidylinositol-anchor biosynthesis. Transfers the first alpha-1,4-mannose to GlcN-acyl-PI during GPI precursor assembly. Required for cell wall integrity. The sequence is that of GPI mannosyltransferase 1 (gpi14) from Aspergillus fumigatus (strain ATCC MYA-4609 / CBS 101355 / FGSC A1100 / Af293) (Neosartorya fumigata).